We begin with the raw amino-acid sequence, 345 residues long: Phosphoribosylformylglycinamidine cyclo-ligase (345 aa).

This sequence belongs to the AIR synthase family.

It is found in the cytoplasm. It catalyses the reaction 2-formamido-N(1)-(5-O-phospho-beta-D-ribosyl)acetamidine + ATP = 5-amino-1-(5-phospho-beta-D-ribosyl)imidazole + ADP + phosphate + H(+). Its pathway is purine metabolism; IMP biosynthesis via de novo pathway; 5-amino-1-(5-phospho-D-ribosyl)imidazole from N(2)-formyl-N(1)-(5-phospho-D-ribosyl)glycinamide: step 2/2. The polypeptide is Phosphoribosylformylglycinamidine cyclo-ligase (Chromobacterium violaceum (strain ATCC 12472 / DSM 30191 / JCM 1249 / CCUG 213 / NBRC 12614 / NCIMB 9131 / NCTC 9757 / MK)).